The primary structure comprises 336 residues: GTPase Obg (336 aa).

One can recognise an Obg domain in the interval 1–159 (MKFLDETKVY…KTIWLRLKLI (159 aa)). Positions 160 to 327 (ADAGLVGLPN…ALRALRSVIA (168 aa)) constitute an OBG-type G domain. GTP-binding positions include 166–173 (GLPNAGKS), 191–195 (FTTLH), 212–215 (DIPG), 279–282 (SQID), and 308–310 (SAV). Mg(2+) contacts are provided by Ser-173 and Thr-193.

It belongs to the TRAFAC class OBG-HflX-like GTPase superfamily. OBG GTPase family. Monomer. It depends on Mg(2+) as a cofactor.

It is found in the cytoplasm. An essential GTPase which binds GTP, GDP and possibly (p)ppGpp with moderate affinity, with high nucleotide exchange rates and a fairly low GTP hydrolysis rate. Plays a role in control of the cell cycle, stress response, ribosome biogenesis and in those bacteria that undergo differentiation, in morphogenesis control. This chain is GTPase Obg, found in Rhizobium meliloti (strain 1021) (Ensifer meliloti).